Here is a 94-residue protein sequence, read N- to C-terminus: MKRKIIVACGGAVATSTMAAEEIKELCQSHNIPVELIQCRVNEIETYMDGVHLICTTARVDRSFGDIPLVHGMPFVSGVGIEALQNKILTILQG.

The region spanning 1–94 is the PTS EIIB type-2 domain; it reads MKRKIIVACG…QNKILTILQG (94 aa). C9 functions as the Phosphocysteine intermediate; for EIIB activity in the catalytic mechanism. C9 carries the phosphocysteine; by EIIA modification.

Forms a complex with one each of subunit of GatA, GatB and 2 subunits of GatC.

The protein resides in the cytoplasm. It carries out the reaction galactitol(out) + N(pros)-phospho-L-histidyl-[protein] = galactitol 1-phosphate(in) + L-histidyl-[protein]. The phosphoenolpyruvate-dependent sugar phosphotransferase system (PTS), a major carbohydrate active transport system, catalyzes the phosphorylation of incoming sugar substrates concomitant with their translocation across the cell membrane. The enzyme II complex composed of GatA, GatB and GatC is involved in galactitol transport. The polypeptide is PTS system galactitol-specific EIIB component (gatB) (Escherichia coli O157:H7).